The primary structure comprises 164 residues: MKKQVVEVLVEGGKATPGPPLGPAIGPLGLNVKQVVDKINEATKEFAGMQVPVKIIVDPVTKQFEIEVGVPPTSQLIKKELGLEKGSGEPKHNIVGNLTMEQVIKIAKMKRNQMLALTLKAAAKEVIGTALSMGVTVEGKDPREVQREIDEGVYDELFEKAEKE.

Belongs to the universal ribosomal protein uL11 family. In terms of assembly, part of the ribosomal stalk of the 50S ribosomal subunit. Interacts with L10 and the large rRNA to form the base of the stalk. L10 forms an elongated spine to which L12 dimers bind in a sequential fashion forming a multimeric L10(L12)X complex.

Its function is as follows. Forms part of the ribosomal stalk which helps the ribosome interact with GTP-bound translation factors. The sequence is that of Large ribosomal subunit protein uL11 from Pyrococcus abyssi (strain GE5 / Orsay).